A 208-amino-acid polypeptide reads, in one-letter code: RNA-binding protein KhpB (208 aa).

Residues 5-55 (TAAGRNVDEAVQSGLQELGLTKDKVEITVIEEGNKGFLGIFGKKPAIVKLV) are jag_N domain. Residues 58-135 (IDPIQQAKLY…GQYKNVTVDA (78 aa)) form the KH domain. The R3H domain maps to 140–208 (LKRKETLSQL…NRHLVISHKR (69 aa)).

Belongs to the KhpB RNA-binding protein family. As to quaternary structure, forms a complex with KhpA.

The protein resides in the cytoplasm. Its function is as follows. A probable RNA chaperone. Forms a complex with KhpA which binds to cellular RNA and controls its expression. Plays a role in peptidoglycan (PG) homeostasis and cell length regulation. This is RNA-binding protein KhpB from Bacillus subtilis (strain 168).